Here is a 179-residue protein sequence, read N- to C-terminus: MLKIKSTTVIAVMHNNEVAIGADGQATMGSTVVKGNVNKIRKLLDGKVLTGFAGSTADAFTLLDRFDEKLQRYFGHMKRSAIELAKDWRTDRYLRRLEAMLIAVNKEELLLISGTGDVIEPDNGIVTIGSGSLYAESAAIALKKHAPHLTAEEIVRESLTIAADICIYTNDNLTIEKIS.

Residue Thr7 is part of the active site. Na(+) is bound by residues Ala163, Cys166, and Thr169.

Belongs to the peptidase T1B family. HslV subfamily. As to quaternary structure, a double ring-shaped homohexamer of HslV is capped on each side by a ring-shaped HslU homohexamer. The assembly of the HslU/HslV complex is dependent on binding of ATP.

The protein localises to the cytoplasm. It carries out the reaction ATP-dependent cleavage of peptide bonds with broad specificity.. Allosterically activated by HslU binding. Its function is as follows. Protease subunit of a proteasome-like degradation complex believed to be a general protein degrading machinery. The polypeptide is ATP-dependent protease subunit HslV (Amoebophilus asiaticus (strain 5a2)).